A 304-amino-acid chain; its full sequence is MDEGDLEAIVRGYSGSGDAFSGESSGTFSPSFCLPMETSSFYEPEMETSGLDELGELYKPFYPFSTQTILTSSVSLPEDSKPFRDDKKQRSHGCLLSNGSRADHIRISESKSKKSKKNQQKRVVEQVKEENLLSDAWAWRKYGQKPIKGSPYPRSYYRCSSSKGCLARKQVERNPQNPEKFTITYTNEHNHELPTRRNSLAGSTRAKTSQPKPTLTKKSEKEVVSSPTSNPMIPSADESSVAVQEMSVAETSTHQAAGAIEGRRLSNGLPSDLMSGSGTFPSFTGDFDELLNSQEFFSGYLWNY.

2 disordered regions span residues 76-96 (LPED…GCLL) and 185-236 (YTNE…IPSA). Basic and acidic residues predominate over residues 78–88 (EDSKPFRDDKK). A DNA-binding region (WRKY) is located at residues 128 to 194 (KEENLLSDAW…YTNEHNHELP (67 aa)). 2 stretches are compositionally biased toward polar residues: residues 196-213 (RRNS…QPKP) and 225-236 (SSPTSNPMIPSA).

This sequence belongs to the WRKY group II-e family.

It localises to the nucleus. Its function is as follows. Transcription factor involved in the expression of defense genes in innate immune response of plants. Interacts specifically with the W box (5'-(T)TGAC[CT]-3'), a frequently occurring elicitor-responsive cis-acting element. Activates WRKY 22, SIRK and its own promoters. The sequence is that of Probable WRKY transcription factor 29 (WRKY29) from Arabidopsis thaliana (Mouse-ear cress).